The following is a 262-amino-acid chain: Acyl-[acyl-carrier-protein]--UDP-N-acetylglucosamine O-acyltransferase (262 aa).

The protein belongs to the transferase hexapeptide repeat family. LpxA subfamily. As to quaternary structure, homotrimer.

It is found in the cytoplasm. It carries out the reaction a (3R)-hydroxyacyl-[ACP] + UDP-N-acetyl-alpha-D-glucosamine = a UDP-3-O-[(3R)-3-hydroxyacyl]-N-acetyl-alpha-D-glucosamine + holo-[ACP]. It participates in glycolipid biosynthesis; lipid IV(A) biosynthesis; lipid IV(A) from (3R)-3-hydroxytetradecanoyl-[acyl-carrier-protein] and UDP-N-acetyl-alpha-D-glucosamine: step 1/6. Functionally, involved in the biosynthesis of lipid A, a phosphorylated glycolipid that anchors the lipopolysaccharide to the outer membrane of the cell. This Shigella dysenteriae serotype 1 (strain Sd197) protein is Acyl-[acyl-carrier-protein]--UDP-N-acetylglucosamine O-acyltransferase.